The chain runs to 370 residues: Histidinol-phosphate aminotransferase (370 aa).

Residue Lys223 is modified to N6-(pyridoxal phosphate)lysine.

This sequence belongs to the class-II pyridoxal-phosphate-dependent aminotransferase family. Histidinol-phosphate aminotransferase subfamily. As to quaternary structure, homodimer. It depends on pyridoxal 5'-phosphate as a cofactor.

It carries out the reaction L-histidinol phosphate + 2-oxoglutarate = 3-(imidazol-4-yl)-2-oxopropyl phosphate + L-glutamate. It participates in amino-acid biosynthesis; L-histidine biosynthesis; L-histidine from 5-phospho-alpha-D-ribose 1-diphosphate: step 7/9. The protein is Histidinol-phosphate aminotransferase of Methylobacterium nodulans (strain LMG 21967 / CNCM I-2342 / ORS 2060).